Here is a 356-residue protein sequence, read N- to C-terminus: MEAIKQKRSLISLKESFIYPHEWNHEPCDNKFILECFKESVNLGIFQIDDKKSFSYINSCLSSCAYMWPLCNHSQSLMTGRFIQWSFLIDDYLDSLEIDDKKTDSTVLNVEKALINGTITNKNSKLEEYTVFFRNKLFEYCGRERLDAFNLLINELVICLWTLVPFSKIHSKEKDFYPSYQLYRCIRTINVGIIACCALNFILFKDLDVKLWLNPRFRKILNRASIQISIVNDAVSYAKEILNENAYCNTFYFLQKDSTKFSTFDQVCEYLFNEANTYIKDIITDEPLLLHEFEDVEDRKVVQSLLNHVHYLISGNFVWSIENNQRYQSNIYFINLLQSTGKSIGSSWSNIKTFFR.

The DDxx(x)D/E motif motif lies at 90–95 (DDYLDS). An NDxxSxxxD/E motif motif is present at residues 232–240 (NDAVSYAKE).

It belongs to the terpene synthase family.

It catalyses the reaction geranylgeranyl diphosphate = beta-araneosene + diphosphate. Functionally, terpene synthase that converts its substrate farnesyl diphosphate (FPP) into several unidentified sesquiterpenes. TPS10 also converts geranylgeranyl diphosphate (GGPP) into the diterpene beta-araneosene. The polypeptide is Terpene synthase 10 (Dictyostelium purpureum (Slime mold)).